The sequence spans 257 residues: 3-deoxy-manno-octulosonate cytidylyltransferase (257 aa).

It belongs to the KdsB family.

It localises to the cytoplasm. The catalysed reaction is 3-deoxy-alpha-D-manno-oct-2-ulosonate + CTP = CMP-3-deoxy-beta-D-manno-octulosonate + diphosphate. It participates in nucleotide-sugar biosynthesis; CMP-3-deoxy-D-manno-octulosonate biosynthesis; CMP-3-deoxy-D-manno-octulosonate from 3-deoxy-D-manno-octulosonate and CTP: step 1/1. Its pathway is bacterial outer membrane biogenesis; lipopolysaccharide biosynthesis. In terms of biological role, activates KDO (a required 8-carbon sugar) for incorporation into bacterial lipopolysaccharide in Gram-negative bacteria. The chain is 3-deoxy-manno-octulosonate cytidylyltransferase from Methylococcus capsulatus (strain ATCC 33009 / NCIMB 11132 / Bath).